The sequence spans 130 residues: Small ribosomal subunit protein uS11 (130 aa).

The protein belongs to the universal ribosomal protein uS11 family. In terms of assembly, part of the 30S ribosomal subunit. Interacts with proteins S7 and S18. Binds to IF-3.

Its function is as follows. Located on the platform of the 30S subunit, it bridges several disparate RNA helices of the 16S rRNA. Forms part of the Shine-Dalgarno cleft in the 70S ribosome. This is Small ribosomal subunit protein uS11 from Synechococcus sp. (strain CC9902).